The sequence spans 1820 residues: Histone-lysine N-methyltransferase, H3 lysine-9 specific (1820 aa).

12 disordered regions span residues 1–54, 74–251, 284–618, 634–681, 804–836, 850–893, 911–944, 966–996, 1063–1126, 1183–1270, 1296–1335, and 1385–1407; these read MPGA…TSMR, NLLP…TPVT, SLSD…APTK, SSER…KKAV, NVDD…SLSK, SSTL…VNSW, HAKK…EQLR, DVES…STDA, PLSV…NGAV, RYAV…DRTA, KASA…TSQQ, and RSEP…TDSD. Over residues 11-31 the composition is skewed to low complexity; that stretch reads VDNPLVLDSSDSDDNLSGLPL. Residues 109–129 show a composition bias toward polar residues; the sequence is ADSSSPPENQNVISFLGNHSQ. Residues 152–169 show a composition bias toward low complexity; that stretch reads GGENIAGQNNEANAAQAA. Composition is skewed to polar residues over residues 174-204 and 212-222; these read GTPS…SAIN and SIPQQSPSSRA. Low complexity-rich tracts occupy residues 226 to 236, 284 to 311, and 339 to 352; these read RSASIASSRSR, SLSD…TSTT, and TPAT…GPSA. The segment covering 361-370 has biased composition (basic and acidic residues); sequence KSSDQKESPR. Residues 374–385 show a composition bias toward polar residues; it reads SKQPSSPSSTHG. Low complexity predominate over residues 400–424; the sequence is SATSGKSSAASSRSKSRAPLSSRAA. Residues 433–442 are compositionally biased toward polar residues; sequence SKTTSVSSTH. Low complexity predominate over residues 443–459; that stretch reads PPSRASPSSLPSQSQRQ. The span at 479–510 shows a compositional bias: polar residues; it reads TLSSGTGQSTPSKFSLPTSDVASNQKNKSTGL. Composition is skewed to low complexity over residues 514-531, 551-563, and 594-618; these read PKKP…RTST, QSSS…IQTS, and TKAT…APTK. Composition is skewed to polar residues over residues 643-662 and 810-827; these read GKSQ…TAAS and SAQP…SVSS. Positions 850–861 are enriched in low complexity; it reads SSTLGDSVSGLG. The segment covering 869 to 893 has biased composition (polar residues); it reads TQSMPQSPLPTTNTNNSSGIEVNSW. Basic and acidic residues-rich tracts occupy residues 917–944 and 966–983; these read KERE…EQLR and DVES…ETRK. The span at 1076–1089 shows a compositional bias: low complexity; sequence SSSSTSTPSLLSRS. Over residues 1296-1320 the composition is skewed to low complexity; sequence KASAVSPVPSANRPSPAPSAKADLL. The 70-residue stretch at 1516–1585 folds into the Pre-SET domain; the sequence is LGCDCDGPCD…ECMNRVIQRG (70 aa). Positions 1518, 1520, 1524, 1531, 1533, 1567, 1571, 1573, and 1577 each coordinate Zn(2+). In terms of domain architecture, SET spans 1590 to 1750; that stretch reads TGIEIFKTKE…KHEELCISYK (161 aa). S-adenosyl-L-methionine-binding positions include 1600–1602, tyrosine 1643, arginine 1704, and 1707–1708; these read KGW and NH. A Zn(2+)-binding site is contributed by cysteine 1710. Residues 1756–1794 are disordered; it reads DDIPSPEPVKKKKGGKGKKQMSKTSASAHPPEMTALNSD. The span at 1765 to 1776 shows a compositional bias: basic residues; the sequence is KKKKGGKGKKQM. The Post-SET domain occupies 1800-1816; it reads VKDICRCGAKNCDGRMF. Zn(2+)-binding residues include cysteine 1804, cysteine 1806, and cysteine 1811.

This sequence belongs to the class V-like SAM-binding methyltransferase superfamily. Histone-lysine methyltransferase family. Suvar3-9 subfamily.

The protein resides in the nucleus. It localises to the chromosome. The enzyme catalyses N(6)-methyl-L-lysyl(9)-[histone H3] + S-adenosyl-L-methionine = N(6),N(6)-dimethyl-L-lysyl(9)-[histone H3] + S-adenosyl-L-homocysteine + H(+). It carries out the reaction L-lysyl(9)-[histone H3] + S-adenosyl-L-methionine = N(6)-methyl-L-lysyl(9)-[histone H3] + S-adenosyl-L-homocysteine + H(+). In terms of biological role, histone methyltransferase that specifically dimethylates histone H3 to form H3K9me2. H3K9me2 represents a specific tag for epigenetic transcriptional repression by recruiting HP1 proteins to methylated histones. Mainly functions in heterochromatin regions, thereby playing a central role in the establishment of constitutive heterochromatin at centromeric regions. This Cryptococcus neoformans var. grubii serotype A (strain H99 / ATCC 208821 / CBS 10515 / FGSC 9487) (Filobasidiella neoformans var. grubii) protein is Histone-lysine N-methyltransferase, H3 lysine-9 specific.